Consider the following 152-residue polypeptide: Acidic phospholipase A2 S16-19 (152 aa).

Positions 1-19 are cleaved as a signal peptide; it reads MYPAHLLVLLAVCVSLLGA. Residues 20–27 constitute a propeptide that is removed on maturation; it reads SNIPLPSL. 6 cysteine pairs are disulfide-bonded: C38–C104, C54–C151, C71–C132, C78–C125, C88–C118, and C111–C123. Ca(2+)-binding residues include Y55, G57, and G59. The active site involves H75. D76 lines the Ca(2+) pocket. D126 is an active-site residue.

It belongs to the phospholipase A2 family. Group I subfamily. D49 sub-subfamily. The cofactor is Ca(2+). This enzyme lacks one of the seven disulfide bonds found in similar PLA2 proteins. Expressed by the venom gland.

The protein resides in the secreted. The enzyme catalyses a 1,2-diacyl-sn-glycero-3-phosphocholine + H2O = a 1-acyl-sn-glycero-3-phosphocholine + a fatty acid + H(+). Functionally, snake venom phospholipase A2 (PLA2) that inhibits collagen-induced platelet aggregation. PLA2 catalyzes the calcium-dependent hydrolysis of the 2-acyl groups in 3-sn-phosphoglycerides. The polypeptide is Acidic phospholipase A2 S16-19 (Austrelaps superbus (Lowland copperhead snake)).